A 118-amino-acid chain; its full sequence is Holo-[acyl-carrier-protein] synthase (118 aa).

Positions 8 and 60 each coordinate Mg(2+).

This sequence belongs to the P-Pant transferase superfamily. AcpS family. It depends on Mg(2+) as a cofactor.

Its subcellular location is the cytoplasm. The catalysed reaction is apo-[ACP] + CoA = holo-[ACP] + adenosine 3',5'-bisphosphate + H(+). Functionally, transfers the 4'-phosphopantetheine moiety from coenzyme A to a Ser of acyl-carrier-protein. The protein is Holo-[acyl-carrier-protein] synthase of Wolbachia sp. subsp. Drosophila simulans (strain wRi).